A 142-amino-acid polypeptide reads, in one-letter code: Cytochrome c-type biogenesis protein CcmE (142 aa).

Topologically, residues 1–2 (MK) are cytoplasmic. The helical; Signal-anchor for type II membrane protein transmembrane segment at 3–23 (GKYLLGILVILGALGYMVFGG) threads the bilayer. Residues 24–142 (LGRNLVYFLT…EVRKLIEEAQ (119 aa)) are Periplasmic-facing. His118 and Tyr122 together coordinate heme.

The protein belongs to the CcmE/CycJ family.

The protein localises to the cell inner membrane. Heme chaperone required for the biogenesis of c-type cytochromes. Transiently binds heme delivered by CcmC and transfers the heme to apo-cytochromes in a process facilitated by CcmF and CcmH. The polypeptide is Cytochrome c-type biogenesis protein CcmE (Thermus thermophilus (strain ATCC BAA-163 / DSM 7039 / HB27)).